We begin with the raw amino-acid sequence, 228 residues long: Geranylgeranylglyceryl phosphate synthase (228 aa).

Lysine 14 serves as a coordination point for sn-glycerol 1-phosphate. Mg(2+)-binding residues include aspartate 16 and threonine 42. Sn-glycerol 1-phosphate-binding positions include 160 to 165, glycine 190, and 210 to 211; these read YIEYSG and GN.

This sequence belongs to the GGGP/HepGP synthase family. Group I subfamily. The cofactor is Mg(2+).

It is found in the cytoplasm. The catalysed reaction is sn-glycerol 1-phosphate + (2E,6E,10E)-geranylgeranyl diphosphate = sn-3-O-(geranylgeranyl)glycerol 1-phosphate + diphosphate. Its pathway is membrane lipid metabolism; glycerophospholipid metabolism. Its function is as follows. Prenyltransferase that catalyzes the transfer of the geranylgeranyl moiety of geranylgeranyl diphosphate (GGPP) to the C3 hydroxyl of sn-glycerol-1-phosphate (G1P). This reaction is the first ether-bond-formation step in the biosynthesis of archaeal membrane lipids. This Methanocella arvoryzae (strain DSM 22066 / NBRC 105507 / MRE50) protein is Geranylgeranylglyceryl phosphate synthase.